We begin with the raw amino-acid sequence, 159 residues long: MRIGHGFDVHAFGGEGPIIIGGVRIPYEKGLLAHSDGDVALHALTDALLGAAALGDIGKLFPDTDPAFKGADSRELLREAWRRIQAKGYALGNVDVTIIAQAPKMLPHIPQMRVFIAEDLGCHMDDVNVKATTTEKLGFTGRGEGIACEAVALLIKATK.

Residues Asp8 and His10 each contribute to the a divalent metal cation site. 4-CDP-2-C-methyl-D-erythritol 2-phosphate is bound by residues 8–10 and 34–35; these read DVH and HS. His42 contacts a divalent metal cation. Residues 56-58, 61-65, 100-106, 132-135, Phe139, and Arg142 each bind 4-CDP-2-C-methyl-D-erythritol 2-phosphate; these read DIG, FPDTD, AQAPKML, and TTTE.

Belongs to the IspF family. Homotrimer. Requires a divalent metal cation as cofactor.

It catalyses the reaction 4-CDP-2-C-methyl-D-erythritol 2-phosphate = 2-C-methyl-D-erythritol 2,4-cyclic diphosphate + CMP. The protein operates within isoprenoid biosynthesis; isopentenyl diphosphate biosynthesis via DXP pathway; isopentenyl diphosphate from 1-deoxy-D-xylulose 5-phosphate: step 4/6. Involved in the biosynthesis of isopentenyl diphosphate (IPP) and dimethylallyl diphosphate (DMAPP), two major building blocks of isoprenoid compounds. Catalyzes the conversion of 4-diphosphocytidyl-2-C-methyl-D-erythritol 2-phosphate (CDP-ME2P) to 2-C-methyl-D-erythritol 2,4-cyclodiphosphate (ME-CPP) with a corresponding release of cytidine 5-monophosphate (CMP). The protein is 2-C-methyl-D-erythritol 2,4-cyclodiphosphate synthase of Escherichia coli O81 (strain ED1a).